The chain runs to 243 residues: Lectin-4 (243 aa).

Position 1 is a pyrrolidone carboxylic acid (glutamine 1). Asparagine 5 carries N-linked (GlcNAc...) asparagine; in alpha chain glycosylation. Asparagine 18 is a glycosylation site (N-linked (GlcNAc...) asparagine). 2 residues coordinate Mn(2+): glutamate 129 and aspartate 131. The Ca(2+) site is built by aspartate 131, tryptophan 133, asparagine 135, and aspartate 140. Residues aspartate 140 and histidine 145 each coordinate Mn(2+).

Belongs to the leguminous lectin family. As to quaternary structure, homodimer of Alpha and Beta forms. Post-translationally, N-glycosylation of Asn-5 converts form Beta to form Alpha.

Functionally, lectin which has a strong affinity for both the Lewis b and y human blood-group determinants. The polypeptide is Lectin-4 (Griffonia simplicifolia (Bandeiraea simplicifolia)).